Here is an 843-residue protein sequence, read N- to C-terminus: Respiratory burst oxidase homolog protein B (843 aa).

The span at 1-10 shows a compositional bias: acidic residues; that stretch reads MREEEMESSS. The segment at 1 to 27 is disordered; that stretch reads MREEEMESSSEGETNKISRCKATGSDN. Residues 1 to 297 are Cytoplasmic-facing; that stretch reads MREEEMESSS…SYFFLENWKR (297 aa). 2 EF-hand-like regions span residues 114–122 and 148–159; these read AVEGKLPKS and RGTTSSSITKTE. EF-hand domains lie at 171–206 and 215–250; these read SFDD…SASA and NVDE…VPSQ. Ca(2+)-binding residues include D184, N186, D188, R190, and E195. S268 is modified (phosphoserine). The helical transmembrane segment at 298 to 318 threads the bilayer; that stretch reads IWVLTLWISICITLFTWKFLQ. The Extracellular portion of the chain corresponds to 319 to 383; it reads YKRKTVFEVM…FDDNINFHKV (65 aa). One can recognise a Ferric oxidoreductase domain in the interval 336–495; it reads KGSAETLKFN…LFVIVYVLLI (160 aa). The chain crosses the membrane as a helical span at residues 384-404; the sequence is VAFGIAVGIGLHAISHLACDF. The Cytoplasmic portion of the chain corresponds to 405–439; that stretch reads PRLLHAKNVEFEPMKKFFGDERPENYGWFMKGTDG. The helical transmembrane segment at 440-460 threads the bilayer; it reads WTGVTMVVLMLVAYVLAQSWF. Topologically, residues 461-482 are extracellular; that stretch reads RRNRANLPKSLKRLTGFNAFWY. A helical transmembrane segment spans residues 483–503; that stretch reads SHHLFVIVYVLLIVHGYFVYL. Residues 504–511 lie on the Cytoplasmic side of the membrane; it reads SKEWYHKT. A helical membrane pass occupies residues 512 to 529; it reads TWMYLAVPVLLYAFERLI. Over 530-659 the chain is Extracellular; that stretch reads RAFRPGAKAV…PYGAPAQDYR (130 aa). The region spanning 534 to 657 is the FAD-binding FR-type domain; it reads PGAKAVKVLK…DGPYGAPAQD (124 aa). The chain crosses the membrane as a helical span at residues 660–680; sequence NYDVLLLVGLGIGATPLISII. At 681–843 the chain is on the cytoplasmic side; sequence RDVLNNIKNQ…TKFEFHKENF (163 aa).

It belongs to the RBOH (TC 5.B.1.3) family. In terms of assembly, monomer and homodimer.

Its subcellular location is the membrane. In terms of biological role, calcium-dependent NADPH oxidase that generates superoxide. This Arabidopsis thaliana (Mouse-ear cress) protein is Respiratory burst oxidase homolog protein B (RBOHB).